The following is a 293-amino-acid chain: uncharacterized protein (293 aa).

2 disordered regions span residues Met-1–Asp-23 and Glu-52–Ser-83. Basic and acidic residues predominate over residues Lys-8–Gly-17. Over residues Glu-52–Thr-71 the composition is skewed to polar residues.

This is an uncharacterized protein from Mus musculus (Mouse).